The following is a 438-amino-acid chain: Putative formin-like protein 21a (438 aa).

Positions 1–74 are disordered; that stretch reads MSPVEISGAD…RVLPRPPPPP (74 aa). The segment covering 22 to 61 has biased composition (pro residues); it reads PLPPPPPPPPPPMRRRAPLPPPPPPPMRRRAPLPPPPPPA. An FH2 domain is found at 124-438; that stretch reads FPCPSKKKSS…SYGYFDQPWI (315 aa).

The protein belongs to the formin-like family. Class-II subfamily.

In Arabidopsis thaliana (Mouse-ear cress), this protein is Putative formin-like protein 21a (FH21A).